The chain runs to 192 residues: GTP cyclohydrolase-2 (192 aa).

Position 47 to 51 (47 to 51) interacts with GTP; it reads RIHSE. Residues cysteine 52, cysteine 63, and cysteine 65 each contribute to the Zn(2+) site. Residues glutamine 68, 90–92, and threonine 112 each bind GTP; that span reads EGR. The active-site Proton acceptor is the aspartate 124. Arginine 126 functions as the Nucleophile in the catalytic mechanism. Residues threonine 147 and lysine 152 each coordinate GTP.

The protein belongs to the GTP cyclohydrolase II family. The cofactor is Zn(2+).

The enzyme catalyses GTP + 4 H2O = 2,5-diamino-6-hydroxy-4-(5-phosphoribosylamino)-pyrimidine + formate + 2 phosphate + 3 H(+). The protein operates within cofactor biosynthesis; riboflavin biosynthesis; 5-amino-6-(D-ribitylamino)uracil from GTP: step 1/4. Its function is as follows. Catalyzes the conversion of GTP to 2,5-diamino-6-ribosylamino-4(3H)-pyrimidinone 5'-phosphate (DARP), formate and pyrophosphate. This Picrophilus torridus (strain ATCC 700027 / DSM 9790 / JCM 10055 / NBRC 100828 / KAW 2/3) protein is GTP cyclohydrolase-2.